We begin with the raw amino-acid sequence, 321 residues long: Sporulation protein cse15 (321 aa).

2 coiled-coil regions span residues 37–70 (FHQK…TKEK) and 108–205 (IEEK…KEKL). Basic and acidic residues-rich tracts occupy residues 234 to 243 (GTKQKEKTEE) and 282 to 293 (AKSHTIEELKNR). 2 disordered regions span residues 234-253 (GTKQ…AQPN) and 274-293 (AHAQ…LKNR).

This is Sporulation protein cse15 (cse15) from Bacillus subtilis (strain 168).